We begin with the raw amino-acid sequence, 1129 residues long: ATP-dependent DNA helicase mph1 (1129 aa).

Disordered stretches follow at residues 1-101 (MTGS…FEDA), 124-222 (TQLT…QNEG), and 236-306 (DAFD…TQHK). Residues 45–63 (DGTASDVRRRPSENRESQR) show a composition bias toward basic and acidic residues. Polar residues-rich tracts occupy residues 203–222 (NTKA…QNEG) and 242–285 (ISLS…QTDQ). Residues 297-306 (QKDEPPTQHK) are compositionally biased toward basic and acidic residues. Positions 331–499 (IAQKGLFHNL…AVIDGLDIAR (169 aa)) constitute a Helicase ATP-binding domain. 344–351 (LPTGLGKT) provides a ligand contact to ATP. The DEAH box signature appears at 447 to 450 (DEAH). The Helicase C-terminal domain maps to 674 to 843 (VLNHFMDAGE…GSRFTFHDDI (170 aa)). Disordered regions lie at residues 863 to 930 (IPDE…VEIP), 1018 to 1060 (RQGD…STED), and 1072 to 1129 (SVVK…DSDD). 2 stretches are compositionally biased toward basic residues: residues 877 to 889 (RRGR…PKKF) and 1028 to 1044 (SPRH…KPRY). Residues 1077-1086 (QKQQPFYSSQ) show a composition bias toward polar residues.

This sequence belongs to the DEAD box helicase family. DEAH subfamily. FANCM sub-subfamily. Interacts with the MHF histone-fold complex to form the FANCM-MHF complex.

Its subcellular location is the nucleus. It carries out the reaction ATP + H2O = ADP + phosphate + H(+). Its function is as follows. ATP-dependent DNA helicase involved in DNA damage repair by homologous recombination and in genome maintenance. Capable of unwinding D-loops. Plays a role in limiting crossover recombinants during mitotic DNA double-strand break (DSB) repair. Component of a FANCM-MHF complex which promotes gene conversion at blocked replication forks, probably by reversal of the stalled fork. The sequence is that of ATP-dependent DNA helicase mph1 from Aspergillus oryzae (strain ATCC 42149 / RIB 40) (Yellow koji mold).